Consider the following 484-residue polypeptide: MATLDTASDTASPPRAPVVRRSALGCTKVRDSCQSCATSKIKCPKEKTSCSKCQARGIECQYFFARRPGRRRENSTGHPTSCTSTSTTANSSSSSSRSSNSSSSSSTSPPSSSSSLSSNPEPTSDKDLPRPRSGDGAAANSTEPSILPPANNSVLDITPTDNVLGPYSSDLFSVLEDPSVFAPLPDFDSNMTDVDFSTMDYFEQPVMDGDNFTRALSDIGSLLIPETISFDLGALESDPLSASAVPSLASSVPTPSTAHSVTMMRGLSASISCRCVSQALDLLKALSAKSAPVSPFSGPGAASMTTMSSVQALMGENQQYIDNVSNLLSCSSCTEDTFLLAIVSMIVLKILERYASAARAQVGGGESDTGQRPATSMIPNGKDQMRPLGRIYSTGGRDSARSVLSELHRVQKLVNLLSPKLKKRQEADTRAFAHVAWGRHTVSNENDKALSTLLSPDTLAQMEGDMRKSLSSLSANIINRLRQD.

Positions 33–60 form a DNA-binding region, zn(2)-C6 fungal-type; the sequence is CQSCATSKIKCPKEKTSCSKCQARGIEC. Disordered stretches follow at residues 70–154 and 363–387; these read RRRE…NNSV and GGGE…QMRP. The span at 76–122 shows a compositional bias: low complexity; the sequence is TGHPTSCTSTSTTANSSSSSSRSSNSSSSSSTSPPSSSSSLSSNPEP. The span at 123–133 shows a compositional bias: basic and acidic residues; the sequence is TSDKDLPRPRS. 2 stretches are compositionally biased toward polar residues: residues 139 to 154 and 368 to 378; these read ANST…NNSV and DTGQRPATSMI.

It localises to the nucleus. In terms of biological role, transcription factor that probably regulates the expression of the gene cluster that mediates the biosynthesis of notoamide, a fungal indole alkaloid that belongs to a family of natural products containing a characteristic bicyclo[2.2.2]diazaoctane core. The polypeptide is Notoamide biosynthesis transcriptional activator notL (Aspergillus sp. (strain MF297-2)).